A 128-amino-acid polypeptide reads, in one-letter code: Anion exchange transporter (128 aa).

Residues 1–14 (LFSFKELNEQFKRK) lie on the Extracellular side of the membrane. The helical transmembrane segment at 15-35 (IKVVLPVDLVLIIAASFACYC) threads the bilayer. Over 36–66 (TNMENTYGLEVVGHIPRGIPPPRAPPMNILS) the chain is Cytoplasmic. The chain crosses the membrane as a helical span at residues 67–87 (AVITEAFGVALVGYAASLALA). At 88 to 103 (QGSAKKFKYSVDDNQE) the chain is on the extracellular side. A helical transmembrane segment spans residues 104 to 124 (FLAHGLSNVISSFLFCIPSAA). Residues 125–128 (AMGR) lie on the Cytoplasmic side of the membrane.

Belongs to the SLC26A/SulP transporter (TC 2.A.53) family. As to expression, expressed in gastric epithelium, predominantly in the gastric parietal cells but also at lower levels in mucosal cells.

Its subcellular location is the basolateral cell membrane. The protein localises to the recycling endosome membrane. It localises to the apical cell membrane. The protein resides in the lateral cell membrane. The catalysed reaction is chloride(in) = chloride(out). It carries out the reaction iodide(out) = iodide(in). The enzyme catalyses bromide(in) = bromide(out). It catalyses the reaction oxalate(in) = oxalate(out). The catalysed reaction is nitrate(in) = nitrate(out). It carries out the reaction sulfate(in) = sulfate(out). The enzyme catalyses D-gluconate(in) = D-gluconate(out). It catalyses the reaction thiocyanate(in) = thiocyanate(out). The catalysed reaction is hydrogencarbonate(in) = hydrogencarbonate(out). It carries out the reaction hydrogencarbonate(in) + chloride(out) = hydrogencarbonate(out) + chloride(in). In terms of biological role, acts as an anion channel mediating the transport of chloride, bromide, iodide, nitrate, sulfate, gluconate, thiocyanate, oxalate and bicarbonate ions. Its permeability towards bicarbonate is weak and increases when pH is above 7. Mediates thiocyanate transport in retinal pigment epithelium cells. Mediates iodide transport in the thyroid gland, playing an important role in the synthesis of thyroid hormones and the maintenance of thyroid function. In Oryctolagus cuniculus (Rabbit), this protein is Anion exchange transporter.